A 749-amino-acid chain; its full sequence is 5-methyltetrahydropteroyltriglutamate--homocysteine methyltransferase (749 aa).

5-methyltetrahydropteroyltri-L-glutamate is bound by residues 15-18 and Lys114; that span reads RELK. L-homocysteine contacts are provided by residues 425–427 and Glu478; that span reads IGS. L-methionine is bound by residues 425–427 and Glu478; that span reads IGS. A 5-methyltetrahydropteroyltri-L-glutamate-binding site is contributed by Trp555. Asp593 serves as a coordination point for L-homocysteine. Position 593 (Asp593) interacts with L-methionine. Glu599 contributes to the 5-methyltetrahydropteroyltri-L-glutamate binding site. Zn(2+) is bound by residues His636, Cys638, and Glu660. His689 (proton donor) is an active-site residue. Cys721 is a Zn(2+) binding site.

It belongs to the vitamin-B12 independent methionine synthase family. It depends on Zn(2+) as a cofactor.

It carries out the reaction 5-methyltetrahydropteroyltri-L-glutamate + L-homocysteine = tetrahydropteroyltri-L-glutamate + L-methionine. It functions in the pathway amino-acid biosynthesis; L-methionine biosynthesis via de novo pathway; L-methionine from L-homocysteine (MetE route): step 1/1. Catalyzes the transfer of a methyl group from 5-methyltetrahydrofolate to homocysteine resulting in methionine formation. In Streptococcus pneumoniae serotype 4 (strain ATCC BAA-334 / TIGR4), this protein is 5-methyltetrahydropteroyltriglutamate--homocysteine methyltransferase.